The primary structure comprises 193 residues: Epididymal-specific lipocalin-12 (193 aa).

The first 19 residues, 1–19 (MGPWWALWLILTLPQILGG), serve as a signal peptide directing secretion. A disulfide bridge connects residues Cys-88 and Cys-193. Residues Asn-143 and Asn-172 are each glycosylated (N-linked (GlcNAc...) asparagine).

This sequence belongs to the calycin superfamily. Lipocalin family. In terms of assembly, monomer.

The protein localises to the secreted. Functionally, binds all-trans retinoic acid and may act as a retinoid carrier protein within the epididymis. May play a role in male fertility. The polypeptide is Epididymal-specific lipocalin-12 (Lcn12) (Rattus norvegicus (Rat)).